The chain runs to 263 residues: Imidazole glycerol phosphate synthase subunit HisF (263 aa).

Active-site residues include D11 and D130.

It belongs to the HisA/HisF family. Heterodimer of HisH and HisF.

Its subcellular location is the cytoplasm. It carries out the reaction 5-[(5-phospho-1-deoxy-D-ribulos-1-ylimino)methylamino]-1-(5-phospho-beta-D-ribosyl)imidazole-4-carboxamide + L-glutamine = D-erythro-1-(imidazol-4-yl)glycerol 3-phosphate + 5-amino-1-(5-phospho-beta-D-ribosyl)imidazole-4-carboxamide + L-glutamate + H(+). It functions in the pathway amino-acid biosynthesis; L-histidine biosynthesis; L-histidine from 5-phospho-alpha-D-ribose 1-diphosphate: step 5/9. Functionally, IGPS catalyzes the conversion of PRFAR and glutamine to IGP, AICAR and glutamate. The HisF subunit catalyzes the cyclization activity that produces IGP and AICAR from PRFAR using the ammonia provided by the HisH subunit. This chain is Imidazole glycerol phosphate synthase subunit HisF, found in Synechococcus sp. (strain CC9311).